A 37-amino-acid polypeptide reads, in one-letter code: Cytochrome b6-f complex subunit 5 (37 aa).

Residues 5–25 (LLSGIVLGLIPITLFGLLVAA) form a helical membrane-spanning segment.

It belongs to the PetG family. As to quaternary structure, the 4 large subunits of the cytochrome b6-f complex are cytochrome b6, subunit IV (17 kDa polypeptide, PetD), cytochrome f and the Rieske protein, while the 4 small subunits are PetG, PetL, PetM and PetN. The complex functions as a dimer.

It localises to the plastid. The protein localises to the chloroplast thylakoid membrane. Its function is as follows. Component of the cytochrome b6-f complex, which mediates electron transfer between photosystem II (PSII) and photosystem I (PSI), cyclic electron flow around PSI, and state transitions. PetG is required for either the stability or assembly of the cytochrome b6-f complex. The polypeptide is Cytochrome b6-f complex subunit 5 (Pyropia yezoensis (Susabi-nori)).